The following is a 202-amino-acid chain: MEERGTGMGLNPAPSTGPVLAPAPKGILDPSTGKPVGANDPFFLEVNSELSDKGFFVAATDDLITWARTGSLMWMTFGLACCAVEMMQVSMPRYDVERFGFAPRASPRQSDVMIVAGTLTNKMAPALRKVYDQMPEPRYVISMGSCANGGGYYHYSYSVVRGCDRIVPIDIYVPGCPPTAEALLYGVLLLQKKIRRTGTIER.

Residues C81, C82, C146, and C176 each contribute to the [4Fe-4S] cluster site.

This sequence belongs to the complex I 20 kDa subunit family. As to quaternary structure, NDH-1 is composed of 14 different subunits. Subunits NuoB, C, D, E, F, and G constitute the peripheral sector of the complex. Requires [4Fe-4S] cluster as cofactor.

The protein localises to the cell inner membrane. The enzyme catalyses a quinone + NADH + 5 H(+)(in) = a quinol + NAD(+) + 4 H(+)(out). Its function is as follows. NDH-1 shuttles electrons from NADH, via FMN and iron-sulfur (Fe-S) centers, to quinones in the respiratory chain. The immediate electron acceptor for the enzyme in this species is believed to be ubiquinone. Couples the redox reaction to proton translocation (for every two electrons transferred, four hydrogen ions are translocated across the cytoplasmic membrane), and thus conserves the redox energy in a proton gradient. This chain is NADH-quinone oxidoreductase subunit B, found in Bradyrhizobium diazoefficiens (strain JCM 10833 / BCRC 13528 / IAM 13628 / NBRC 14792 / USDA 110).